We begin with the raw amino-acid sequence, 212 residues long: uncharacterized protein (212 aa).

The next 4 membrane-spanning stretches (helical) occupy residues 20–40, 70–90, 155–175, and 192–212; these read FLIG…LIIC, LMLL…YWLG, FVLI…YLGE, and QIVI…MEKI.

This sequence belongs to the DedA family.

Its subcellular location is the cell membrane. This is an uncharacterized protein from Haemophilus influenzae (strain ATCC 51907 / DSM 11121 / KW20 / Rd).